The primary structure comprises 332 residues: N-arachidonyl glycine receptor (332 aa).

The Extracellular segment spans residues 1–26 (MTTPHSQAQPGLPIDPHPDEYKVAAL). Residues 27-47 (VFYSCIFIIGLFVNVTALWVF) traverse the membrane as a helical segment. The Cytoplasmic segment spans residues 48-56 (SCTTKKRTT). A helical membrane pass occupies residues 57–77 (VTVYMMNVALLDLVFIMSLPF). The Extracellular portion of the chain corresponds to 78 to 95 (RMLYYAKGEWPFGEYFCR). The cysteines at positions 94 and 173 are disulfide-linked. Residues 96-116 (ILGALTVFYPSIALWLLAFIS) form a helical membrane-spanning segment. Residues 117 to 138 (ADRYMAIVQPKYAKELKNTCKA) are Cytoplasmic-facing. The helical transmembrane segment at 139–159 (VMACVGVWIMTLTTTIPLLLL) threads the bilayer. Topologically, residues 160–192 (YEDPDTASSTPPTCLKISDIIYLKAINALNFTR) are extracellular. An N-linked (GlcNAc...) asparagine glycan is attached at Asn-189. The helical transmembrane segment at 193 to 213 (LIFFFLIPLFIMIGCYLVIIH) threads the bilayer. The Cytoplasmic segment spans residues 214-233 (SLLHGKTSKLKPKVKEKSIR). The helical transmembrane segment at 234-254 (IIITLMVQVLVCFMPFHICFA) threads the bilayer. The Extracellular segment spans residues 255-269 (FLMLGGDENSYNPWG). Residues 270-290 (AFTTFLMNLSTCLDVILYYIV) traverse the membrane as a helical segment. The Cytoplasmic portion of the chain corresponds to 291–332 (SKQFQARVISVMLYRNYLRSVRRKSFRSGSLRSLSNINSEML). The residue at position 323 (Ser-323) is a Phosphoserine.

The protein belongs to the G-protein coupled receptor 1 family.

Its subcellular location is the cell membrane. The protein resides in the cytoplasmic vesicle membrane. In terms of biological role, g protein-coupled receptor (GPCR) that plays a role in diverse physiological processes particularly within the immune and nervous systems. Becomes active when triggered by various endogenous ligands including endocannabinoid N-arachidonyl glycine (NAGly), delta-9-tetrahydrocannabinol or resolvin D2/RvD2 derived from the omega-3 fatty acid docosahexaenoic acid (DHA). Upon RvD2 binding, facilitates the resolution of inflammation, aiding in tissue repair and homeostasis. Mechanistically, RvD2 ligation initiates Galphas protein coupling, activation of cAMP-PKA signaling pathway and phosphorylation of STAT3, leading to RvD2-stimulated macrophage phagocytosis. Mediates NAGly-induced process of reorganization of actin filaments and induction of acrosomal exocytosis. Activation by N-arachidonoyl glycine (NAGly) can also induce apoptosis in macrophages. Plays a role in homeostasis of CD8+ subsets of intraepithelial lymphocytes (IELs) (CD8alphaalpha and CD8alphabeta IELs) in small intestine by supporting preferential migration of CD8alphaalpha T-cells to intraepithelial compartment over lamina propria compartment, and by mediating their reconstitution into small intestine after bone marrow transplant. Participates also in hypotensive responses, mediating reduction in intraocular and blood pressure. The protein is N-arachidonyl glycine receptor (GPR18) of Bos taurus (Bovine).